Consider the following 2499-residue polypeptide: Probable polyketide synthase 23 (2499 aa).

The 420-residue stretch at 11 to 430 folds into the Ketosynthase family 3 (KS3) domain; the sequence is DNQVAIVGLG…GSNACVLLSE (420 aa). Residues cysteine 177, histidine 316, and histidine 354 each act as for beta-ketoacyl synthase activity in the active site. The segment at 623-656 is acyl/malonyl transferases; that stretch reads GITPSIIVGHSLGEVASAFCSGMIDLETACFVIY. Serine 633 acts as the For acyl/malonyl transferase activity in catalysis. The tract at residues 924-1044 is N-terminal hotdog fold; sequence INQLGNKNEL…SRILMKSLDV (121 aa). The PKS/mFAS DH domain occupies 924 to 1209; the sequence is INQLGNKNEL…IASTLSTNID (286 aa). Histidine 956 (proton acceptor; for dehydratase activity) is an active-site residue. The segment at 1059–1209 is C-terminal hotdog fold; it reads NWSTLKREQL…IASTLSTNID (151 aa). Aspartate 1121 acts as the Proton donor; for dehydratase activity in catalysis. A Carrier domain is found at 2414-2491; it reads EKEFSIRQDI…QIINIVTTKV (78 aa). An O-(pantetheine 4'-phosphoryl)serine modification is found at serine 2451.

Requires pantetheine 4'-phosphate as cofactor.

In terms of biological role, probable polyketide synthase. This is Probable polyketide synthase 23 (pks23) from Dictyostelium discoideum (Social amoeba).